The sequence spans 369 residues: Actin-related protein 2/3 complex subunit 1B-A (369 aa).

WD repeat units follow at residues 6-45 (FLLE…WSKI), 50-89 (EHNG…WKPT), 94-135 (RINR…WVCK), 140-179 (PIRS…VEER), 200-239 (SSCG…RVTS), 242-282 (TDTL…LSFG), and 321-364 (LHKN…SAMK).

Belongs to the WD repeat ARPC1 family. As to quaternary structure, component of the Arp2/3 complex composed of actr2/arp2, actr3/arp3, arpc1 (arpc1a or arpc1b), arpc2, arpc3, arpc4 and arpc5.

The protein resides in the cytoplasm. The protein localises to the cytoskeleton. Its subcellular location is the nucleus. Functionally, component of the Arp2/3 complex, a multiprotein complex that mediates actin polymerization upon stimulation by nucleation-promoting factor (NPF). The Arp2/3 complex mediates the formation of branched actin networks in the cytoplasm, providing the force for cell motility. In addition to its role in the cytoplasmic cytoskeleton, the Arp2/3 complex also promotes actin polymerization in the nucleus, thereby regulating gene transcription and repair of damaged DNA. The Arp2/3 complex promotes homologous recombination (HR) repair in response to DNA damage by promoting nuclear actin polymerization, leading to drive motility of double-strand breaks (DSBs). The sequence is that of Actin-related protein 2/3 complex subunit 1B-A (arpc1b-a) from Xenopus laevis (African clawed frog).